Here is a 202-residue protein sequence, read N- to C-terminus: NADH-quinone oxidoreductase subunit C (202 aa).

This sequence belongs to the complex I 30 kDa subunit family. In terms of assembly, NDH-1 is composed of 14 different subunits. Subunits NuoB, C, D, E, F, and G constitute the peripheral sector of the complex.

It localises to the cell inner membrane. The enzyme catalyses a quinone + NADH + 5 H(+)(in) = a quinol + NAD(+) + 4 H(+)(out). Functionally, NDH-1 shuttles electrons from NADH, via FMN and iron-sulfur (Fe-S) centers, to quinones in the respiratory chain. The immediate electron acceptor for the enzyme in this species is believed to be ubiquinone. Couples the redox reaction to proton translocation (for every two electrons transferred, four hydrogen ions are translocated across the cytoplasmic membrane), and thus conserves the redox energy in a proton gradient. This is NADH-quinone oxidoreductase subunit C from Bartonella henselae (strain ATCC 49882 / DSM 28221 / CCUG 30454 / Houston 1) (Rochalimaea henselae).